The sequence spans 327 residues: uncharacterized protein (327 aa).

In terms of domain architecture, S4 RNA-binding spans 12 to 84; the sequence is MRIDRYLTQQ…IPITILYEDD (73 aa). Asp137 is a catalytic residue.

This sequence belongs to the pseudouridine synthase RluA family.

The enzyme catalyses a uridine in RNA = a pseudouridine in RNA. This is an uncharacterized protein from Chlorobaculum parvum (strain DSM 263 / NCIMB 8327) (Chlorobium vibrioforme subsp. thiosulfatophilum).